Here is a 122-residue protein sequence, read N- to C-terminus: UPF0102 protein XAC0764 (122 aa).

The protein belongs to the UPF0102 family.

This is UPF0102 protein XAC0764 from Xanthomonas axonopodis pv. citri (strain 306).